We begin with the raw amino-acid sequence, 313 residues long: Protein FixB (313 aa).

255–283 (LYLAVGISGQIQHMVGANASQTIFAINKD) contributes to the FAD binding site.

This sequence belongs to the ETF alpha-subunit/FixB family. As to quaternary structure, heterodimer of FixA and FixB.

It participates in amine and polyamine metabolism; carnitine metabolism. Its function is as follows. Required for anaerobic carnitine reduction. May bring reductant to CaiA. In Escherichia coli (strain K12 / MC4100 / BW2952), this protein is Protein FixB.